Consider the following 473-residue polypeptide: P3 protein (473 aa).

Transmembrane regions (helical) follow at residues 25-45 (FVGM…AQVM), 221-241 (PMLL…FLMA), 249-269 (ALAL…SYLF), 277-297 (VTLA…FLPL), 316-336 (ISKI…GVVI), 356-376 (FILL…ILVG), 381-401 (IVLV…SLAI), 413-433 (VSIE…QLSL), and 446-466 (FIVA…QFIY).

The protein belongs to the bile acid:sodium symporter (BASS) (TC 2.A.28) family.

The protein localises to the membrane. In terms of biological role, the ubiquitous expression and the conservation of the sequence in distant animal species suggest that the gene codes for a protein with housekeeping functions. In Mus musculus (Mouse), this protein is P3 protein (Slc10a3).